The sequence spans 335 residues: tRNA pseudouridine synthase D (335 aa).

D77 functions as the Nucleophile in the catalytic mechanism. A TRUD domain is found at 152 to 308; it reads GFPNYFTEQR…AQHLSWSFIP (157 aa).

Belongs to the pseudouridine synthase TruD family.

It catalyses the reaction uridine(13) in tRNA = pseudouridine(13) in tRNA. Functionally, responsible for synthesis of pseudouridine from uracil-13 in transfer RNAs. In Histophilus somni (strain 129Pt) (Haemophilus somnus), this protein is tRNA pseudouridine synthase D.